A 463-amino-acid chain; its full sequence is MGPWSGSRLVALLLLVYGAGSVRGDTPANCTYPDLLGTWVFQVGSSGSQRDVNCSVMGPPEKKVVVHLKKLDTAYDDFGNSGHFTIIYNQGFEIVLNDYKWFAFFKYKEEGGKVTSYCHETMTGWVHDVLGRNRACFTGRKTGNTSENVNVNTARLAGLEETYSNRLYRYNHDFVKAINAIQKSWTAAPYMEYETLTLKEMIRRGGGHSRRIPRPKPAPITAEIQKKILHLPTSWDWRNVHGINFVTPVRNQGSCGSCYSFASMGMMEARIRILTNNTQTPILSPQEVVSCSQYAQGCEGGFPYLIAGKYAQDFGLVEEDCFPYTGTDSPCRLKEGCFRYYSSEYHYVGGFYGGCNEALMKLELVHQGPMAVAFEVYDDFLHYRKGVYHHTGLRDPFNPFELTNHAVLLVGYGTDAASGLDYWIVKNSWGTSWGENGYFRIRRGTDECAIESIALAATPIPKL.

Positions 1 to 24 (MGPWSGSRLVALLLLVYGAGSVRG) are cleaved as a signal peptide. N-linked (GlcNAc...) asparagine glycosylation is found at Asn29 and Asn53. Intrachain disulfides connect Cys30-Cys118 and Cys54-Cys136. A propeptide spanning residues 135–230 (ACFTGRKTGN…TAEIQKKILH (96 aa)) is cleaved from the precursor. Residue Asn144 is glycosylated (N-linked (GlcNAc...) asparagine). Disulfide bonds link Cys255–Cys298, Cys291–Cys331, and Cys321–Cys337. Residue Cys258 is part of the active site. Asn276 carries N-linked (GlcNAc...) asparagine glycosylation. Chloride is bound by residues Phe302 and Tyr304. Tyr347 is a binding site for chloride. Residues His405 and Asn427 contribute to the active site.

It belongs to the peptidase C1 family. As to quaternary structure, tetramer of heterotrimers consisting of exclusion domain, heavy- and light chains. Chloride is required as a cofactor.

The protein localises to the lysosome. The enzyme catalyses Release of an N-terminal dipeptide, Xaa-Yaa-|-Zaa-, except when Xaa is Arg or Lys, or Yaa or Zaa is Pro.. Its function is as follows. Thiol protease. Has dipeptidylpeptidase activity. Active against a broad range of dipeptide substrates composed of both polar and hydrophobic amino acids. Proline cannot occupy the P1 position and arginine cannot occupy the P2 position of the substrate. Can act as both an exopeptidase and endopeptidase. Activates serine proteases such as elastase, cathepsin G and granzymes A and B. This is Dipeptidyl peptidase 1 (CTSC) from Bos taurus (Bovine).